Reading from the N-terminus, the 382-residue chain is uncharacterized protein (382 aa).

The next 12 membrane-spanning stretches (helical) occupy residues 14–34 (GLLLLTLAIAVLNTLVPLWLA), 45–65 (VVSSSYFTGNLVGTLLTGYVI), 79–99 (FIFAAGCAGLGLMIGFWSWLA), 102–122 (FVAGVGCAMIWVVVESALMCS), 131–151 (LLAAYMMVYYVGTFLGQLLVS), 157–177 (LMSVLPWVTGLTLAGILPLLF), 204–224 (LGVNGCIISGIVLGSLYGLMP), 235–255 (ASIGFWMAVLVSAGILGQWPI), 270–290 (VQVFVVILGSIAMLSQAAMAP), 291–311 (ALFILGAAGFTLYPVAMAWAC), 325–345 (ALLLSYTVGSLLGPSFTAMLM), and 348–368 (FSDNLLFIMIASVSFIYLLML).

The protein belongs to the major facilitator superfamily. YcaD (TC 2.A.1.26) family.

It is found in the cell inner membrane. This is an uncharacterized protein from Shigella sonnei (strain Ss046).